The sequence spans 121 residues: Methylglyoxal synthase (121 aa).

One can recognise an MGS-like domain in the interval 1–121 (MMKVALIAHD…SAELFLRALN (121 aa)). Substrate-binding positions include His9, Lys13, 35 to 38 (TGTT), and 55 to 56 (SG). Asp61 serves as the catalytic Proton donor/acceptor. His88 is a binding site for substrate.

Belongs to the methylglyoxal synthase family.

The enzyme catalyses dihydroxyacetone phosphate = methylglyoxal + phosphate. Catalyzes the formation of methylglyoxal from dihydroxyacetone phosphate. This Carboxydothermus hydrogenoformans (strain ATCC BAA-161 / DSM 6008 / Z-2901) protein is Methylglyoxal synthase.